A 334-amino-acid polypeptide reads, in one-letter code: Serine/threonine-protein kinase (334 aa).

The Protein kinase domain occupies 53–333 (FEVLQPLQSG…DEILNFGMWT (281 aa)). Residues 59-67 (LQSGSEGRV) and Lys82 each bind ATP. The active-site Proton acceptor is the Asp167.

This sequence belongs to the protein kinase superfamily. Ser/Thr protein kinase family.

The catalysed reaction is L-seryl-[protein] + ATP = O-phospho-L-seryl-[protein] + ADP + H(+). The enzyme catalyses L-threonyl-[protein] + ATP = O-phospho-L-threonyl-[protein] + ADP + H(+). Functionally, able to phosphorylate in vitro the major virion phosphoprotein phosphorylated in vivo. This chain is Serine/threonine-protein kinase (PK), found in Sus scrofa (Pig).